The sequence spans 700 residues: Pentatricopeptide repeat-containing protein 1, mitochondrial (700 aa).

The interval 49–93 (SSSQLPLGQERQENTGSLGSDPSHSNSTATQEEDEEEEESFGTLS) is disordered. Polar residues predominate over residues 62–78 (NTGSLGSDPSHSNSTAT). Residues 79–88 (QEEDEEEEES) show a composition bias toward acidic residues. PPR repeat units follow at residues 135-171 (TPYWYFLQCKHLIKEGKLVEALDLFERQMLKEERLQP), 172-206 (MESNYTVLIGGCGRVGYLKKAFNLYNQMKKRDLEP), 207-245 (SDATYTALFNVCAESPWKDSALQSALKLRQQLQAKNFEL), 246-280 (NLKTYHALLKMAAKCADLRMCLDVFKEIIHKGHVV), 281-317 (TEETFSFLLMGCIQDKKTGFRYALQVWRLMLSLGLQP), and 318-354 (SRDSYNLLLVAARDCGLGDPQVASELLLKPREEATVL). Positions 393 to 414 (SQALGPPEPPEARVPGKAQPEV) are disordered. PPR repeat units follow at residues 519–553 (DLTFFNTLVRKKSKLGDLEGAKALLPVLAKRGLVP), 554–585 (NLQTFCNLAIGCHRPKDGLQLLTDMKKSQVTP), and 586–620 (NTHIYSALINAAIRKLNYTYLISILKDMKQNRVPV). A disordered region spans residues 672–700 (HPWQKFRTKPQGDQDTGKEADDGCALGGR). Residues 681-692 (PQGDQDTGKEAD) are compositionally biased toward basic and acidic residues.

It belongs to the PTCD1 family. As to quaternary structure, associates with mitochondrial leucine tRNAs. Interacts with ELAC2. As to expression, abundant in testes, skeletal muscle and heart.

Its subcellular location is the mitochondrion. The protein resides in the mitochondrion matrix. Mitochondrial protein implicated in negative regulation of leucine tRNA levels, as well as negative regulation of mitochondria-encoded proteins and COX activity. Also affects the 3'-processing of mitochondrial tRNAs. The chain is Pentatricopeptide repeat-containing protein 1, mitochondrial (PTCD1) from Homo sapiens (Human).